Here is a 315-residue protein sequence, read N- to C-terminus: MNQEYLDFELPIAELEAKIEALRAASDDKVDLTDEIKRLQKKSNELTKKTFANLDAWQVSRMARHPNRPYTLDYIEHIFTEFEELAGDRAFADDKAIVGGLARLDGRPVMVIGHQKGRSVKEKVQRNFGMPAPEGYRKALRLMEMAERFKLPIITFIDTPGAYPGIGAEERGQAEAIARNLREMAQLTVPVICTVIGEGGSGGALAIGVGDKVNMLQYSTYSVISPEGCASILWKSAEKASTAAEVMGLTASRLKELNLIDSIMQEPLGGAHRNYAKIAENLKLRLKEDLAELDELSKEELLNRRYERLMSYGYC.

The region spanning 38-292 is the CoA carboxyltransferase C-terminal domain; sequence RLQKKSNELT…KLRLKEDLAE (255 aa).

It belongs to the AccA family. Acetyl-CoA carboxylase is a heterohexamer composed of biotin carboxyl carrier protein (AccB), biotin carboxylase (AccC) and two subunits each of ACCase subunit alpha (AccA) and ACCase subunit beta (AccD).

The protein localises to the cytoplasm. The enzyme catalyses N(6)-carboxybiotinyl-L-lysyl-[protein] + acetyl-CoA = N(6)-biotinyl-L-lysyl-[protein] + malonyl-CoA. Its pathway is lipid metabolism; malonyl-CoA biosynthesis; malonyl-CoA from acetyl-CoA: step 1/1. In terms of biological role, component of the acetyl coenzyme A carboxylase (ACC) complex. First, biotin carboxylase catalyzes the carboxylation of biotin on its carrier protein (BCCP) and then the CO(2) group is transferred by the carboxyltransferase to acetyl-CoA to form malonyl-CoA. This chain is Acetyl-coenzyme A carboxylase carboxyl transferase subunit alpha, found in Haemophilus influenzae (strain 86-028NP).